We begin with the raw amino-acid sequence, 1733 residues long: Probable nuclear antigen (1733 aa).

10 disordered regions span residues Met-1 to Thr-41, Pro-71 to Val-394, Ala-437 to Gln-506, Ala-520 to Ala-548, Leu-882 to Leu-907, Ala-993 to Ala-1141, Pro-1223 to Ala-1242, Gly-1348 to Gly-1475, Ser-1585 to Gly-1608, and Pro-1630 to Cys-1665. A compositionally biased stretch (basic residues) spans Asp-21–Pro-31. Positions Pro-77–Pro-97 are enriched in basic and acidic residues. Over residues Thr-113–Pro-131 the composition is skewed to low complexity. Positions Leu-135 to Arg-147 are enriched in basic and acidic residues. Pro residues predominate over residues Gly-179–Pro-189. Residues Ser-190–Pro-201 are compositionally biased toward low complexity. Positions Ser-202–Pro-220 are enriched in pro residues. Residues Arg-227–His-240 are compositionally biased toward polar residues. Positions Pro-272–Ala-299 are enriched in pro residues. Residues Gly-316–Arg-326 are compositionally biased toward basic residues. Over residues Asp-336–Ala-354 the composition is skewed to acidic residues. Basic and acidic residues predominate over residues Glu-355–Glu-364. Composition is skewed to gly residues over residues Gly-365–Gly-374, Gly-454–Gly-466, and Gly-479–Val-494. A compositionally biased stretch (low complexity) spans Gly-495–Gln-506. Residues Leu-882–Arg-892 are compositionally biased toward gly residues. Residues Gly-893–Leu-907 show a composition bias toward low complexity. 2 stretches are compositionally biased toward gly residues: residues Ala-993 to Gly-1004 and Ala-1027 to Pro-1043. Composition is skewed to basic and acidic residues over residues Gly-1078–Arg-1087 and Arg-1100–Leu-1112. Gly residues predominate over residues Gly-1116–Gly-1127. Residues Gly-1385–Gly-1407 are compositionally biased toward gly residues. Composition is skewed to basic residues over residues Pro-1408 to Arg-1420 and Arg-1444 to Arg-1453. Residues Gly-1454–Ala-1474 show a composition bias toward gly residues. Over residues Arg-1652–Cys-1665 the composition is skewed to gly residues.

The protein is Probable nuclear antigen of Sus scrofa (Pig).